The primary structure comprises 264 residues: MNTLFNTVNFWRYNSSPLTQFEIKDLISIDTPILGNLHISITNIGFYLTMGAFFLLIINLLSTNYNKLIGNSWSISQESLYATLHSIVVNQINPKNGQIYFPFIYALFIFILINNLIGMVPYSFASTSHFVLTFALSFTIVLGATILGFQKHGLEFFSLLVPAGCPLGLLPLLVLIEFISYLARNISLGLRLAANILSGHMLLHILAGFTYNIMTSGIIFFFLGLIPLAFIIAFSGLELGIAFIQAQVFVVLTSGYIKDALDLH.

The next 7 helical transmembrane spans lie at 41-61 (ITNI…INLL), 99-119 (IYFP…LIGM), 129-149 (HFVL…ILGF), 156-176 (FFSL…LVLI), 194-214 (ANIL…YNIM), 217-237 (GIIF…FSGL), and 238-258 (ELGI…GYIK).

The protein belongs to the ATPase A chain family. As to quaternary structure, F-type ATPases have 2 components, CF(1) - the catalytic core - and CF(0) - the membrane proton channel. CF(1) has five subunits: alpha(3), beta(3), gamma(1), delta(1), epsilon(1). CF(0) has three main subunits: a, b and c.

The protein localises to the mitochondrion inner membrane. In terms of biological role, mitochondrial membrane ATP synthase (F(1)F(0) ATP synthase or Complex V) produces ATP from ADP in the presence of a proton gradient across the membrane which is generated by electron transport complexes of the respiratory chain. F-type ATPases consist of two structural domains, F(1) - containing the extramembraneous catalytic core and F(0) - containing the membrane proton channel, linked together by a central stalk and a peripheral stalk. During catalysis, ATP synthesis in the catalytic domain of F(1) is coupled via a rotary mechanism of the central stalk subunits to proton translocation. Key component of the proton channel; it may play a direct role in the translocation of protons across the membrane. This chain is ATP synthase subunit a (ATP6), found in Podospora anserina (strain S / ATCC MYA-4624 / DSM 980 / FGSC 10383) (Pleurage anserina).